Consider the following 1320-residue polypeptide: Protein brunelleschi (1320 aa).

Residues His-313–Leu-411 are disordered. Residues Arg-314–Lys-327 are compositionally biased toward polar residues. Phosphoserine is present on Ser-317. A Phosphothreonine modification is found at Thr-329. Positions Thr-329–Lys-340 are enriched in basic and acidic residues. Polar residues predominate over residues Ser-345 to Val-361. Residues Thr-362–Ala-400 are compositionally biased toward low complexity. Ser-672 bears the Phosphoserine mark. A disordered region spans residues Val-923–Ile-954. A compositionally biased stretch (polar residues) spans Pro-945–Ile-954.

It belongs to the NIBP family. As to quaternary structure, may be part of the multisubunit TRAPP (transport protein particle) complex.

The protein localises to the cytoplasm. It is found in the golgi apparatus. Its function is as follows. Cooperates with Rab11 and fwd/PI4K to mediate the flow of membrane through the Golgi, which is required to support cleavage furrow ingression, therefore promoting cytokinesis in male meiotic cells. The sequence is that of Protein brunelleschi from Drosophila melanogaster (Fruit fly).